We begin with the raw amino-acid sequence, 298 residues long: Probable endonuclease 4 (298 aa).

Residues His-69, His-111, Glu-146, Asp-180, His-183, His-215, Asp-228, His-230, and Glu-260 each contribute to the Zn(2+) site.

Belongs to the AP endonuclease 2 family. Requires Zn(2+) as cofactor.

The enzyme catalyses Endonucleolytic cleavage to 5'-phosphooligonucleotide end-products.. In terms of biological role, endonuclease IV plays a role in DNA repair. It cleaves phosphodiester bonds at apurinic or apyrimidinic (AP) sites, generating a 3'-hydroxyl group and a 5'-terminal sugar phosphate. The chain is Probable endonuclease 4 from Bacillus anthracis (strain A0248).